A 316-amino-acid polypeptide reads, in one-letter code: MANLKEIRDRIVSVKNTRKITEAMRLVAAAKVRRAQDQVLKSRPFADKLARVLENIQSRVQFEAVDSPLLSKRDVKTISLVCITADRGLCGGYNTNIIKKVEIRYAELIKQGYEPNLILVGKKAIGYFQNRKDRYIIKTTFKELEQVPTAKDSEGITSEVLAEFLSENADRVEIIYTKFITLVSCAPVVQTLLPLDPQGIADENDEIFRLTTKDSKLLVEKSNIEKSDSEKLPSDIVFEQSPDQLLDSLLPLYLQNQVLRALQESAASELACRMTAMNNASDNAKELASTLNLTYNKARQAAITQEILEVVGGSAV.

It belongs to the ATPase gamma chain family. F-type ATPases have 2 components, CF(1) - the catalytic core - and CF(0) - the membrane proton channel. CF(1) has five subunits: alpha(3), beta(3), gamma(1), delta(1), epsilon(1). CF(0) has three main subunits: a, b and c.

The protein resides in the cellular thylakoid membrane. In terms of biological role, produces ATP from ADP in the presence of a proton gradient across the membrane. The gamma chain is believed to be important in regulating ATPase activity and the flow of protons through the CF(0) complex. The sequence is that of ATP synthase gamma chain from Prochlorococcus marinus (strain MIT 9312).